A 192-amino-acid chain; its full sequence is FAD-linked sulfhydryl oxidase erv2 (192 aa).

The Cytoplasmic portion of the chain corresponds to 1 to 8; sequence MILNRRIQ. Residues 9-29 form a helical; Signal-anchor membrane-spanning segment; the sequence is VILPTLLILSFIIWIFHSVMV. Residues 30 to 192 lie on the Lumenal side of the membrane; it reads DKDWRLFMPE…VINEDHDYSG (163 aa). The ERV/ALR sulfhydryl oxidase domain occupies 61-162; that stretch reads HDNNTNNLMV…TSCDGFNERY (102 aa). Residues Trp74, Cys138, His141, Asn145, and Tyr162 each contribute to the FAD site. The cysteines at positions 138 and 155 are disulfide-linked.

FAD serves as cofactor.

Its subcellular location is the endoplasmic reticulum membrane. The protein localises to the cytoplasm. It is found in the nucleus. It catalyses the reaction 2 R'C(R)SH + O2 = R'C(R)S-S(R)CR' + H2O2. FAD-dependent sulfhydryl oxidase that catalyzes disulfide bond formation in the endoplasmic reticulum lumen. The polypeptide is FAD-linked sulfhydryl oxidase erv2 (erv2) (Schizosaccharomyces pombe (strain 972 / ATCC 24843) (Fission yeast)).